The sequence spans 931 residues: Probable zinc protease PqqL (931 aa).

His80 contacts Zn(2+). The active-site Proton acceptor is the Glu83. Zn(2+) is bound by residues His84 and Glu160.

It belongs to the peptidase M16 family. Requires Zn(2+) as cofactor.

This is Probable zinc protease PqqL (pqqL) from Escherichia coli (strain K12).